The following is a 1102-amino-acid chain: WASH complex subunit 4 (1102 aa).

It belongs to the SWIP family. Component of the WASH complex.

It localises to the early endosome. Its function is as follows. Acts at least in part as component of the WASH complex which may regulate wash nucleation-promoting factor (NPF) activity and is required for its membrane targeting during endosomal sorting. During embryogenesis, not involved in the wash-dependent developmental migration of hemocytes anteriorly from the tail. The chain is WASH complex subunit 4 from Drosophila melanogaster (Fruit fly).